The sequence spans 320 residues: ATP-dependent 6-phosphofructokinase (320 aa).

An ATP-binding site is contributed by Gly-11. 21-25 (RAIAR) provides a ligand contact to ADP. ATP-binding positions include 72–73 (RF) and 102–105 (GDGS). Asp-103 provides a ligand contact to Mg(2+). Residues 125–127 (TID), Arg-162, and 169–171 (MGR) contribute to the substrate site. Residue Asp-127 is the Proton acceptor of the active site. Residues 185–187 (GAD) and 213–215 (KDH) each bind ADP. Residues Glu-222, Arg-243, and 249-252 (HIQR) each bind substrate.

It belongs to the phosphofructokinase type A (PFKA) family. ATP-dependent PFK group I subfamily. Prokaryotic clade 'B1' sub-subfamily. As to quaternary structure, homotetramer. Mg(2+) is required as a cofactor.

The protein resides in the cytoplasm. The enzyme catalyses beta-D-fructose 6-phosphate + ATP = beta-D-fructose 1,6-bisphosphate + ADP + H(+). The protein operates within carbohydrate degradation; glycolysis; D-glyceraldehyde 3-phosphate and glycerone phosphate from D-glucose: step 3/4. Its activity is regulated as follows. Allosterically activated by ADP and other diphosphonucleosides, and allosterically inhibited by phosphoenolpyruvate. Catalyzes the phosphorylation of D-fructose 6-phosphate to fructose 1,6-bisphosphate by ATP, the first committing step of glycolysis. In Ligilactobacillus salivarius (strain UCC118) (Lactobacillus salivarius), this protein is ATP-dependent 6-phosphofructokinase.